Consider the following 383-residue polypeptide: Pentatricopeptide repeat-containing protein 2, mitochondrial (383 aa).

The PPR repeat unit spans residues 161-195 (TSFNILMDMLFIKGKYKSALEVLIEMKNQNVKFTT). Serine 377 carries the phosphoserine modification.

This sequence belongs to the PTCD2 family.

The protein localises to the mitochondrion. Functionally, involved in mitochondrial RNA maturation and mitochondrial respiratory chain function. The polypeptide is Pentatricopeptide repeat-containing protein 2, mitochondrial (PTCD2) (Pongo abelii (Sumatran orangutan)).